Reading from the N-terminus, the 588-residue chain is NADP-dependent malic enzyme 2 (588 aa).

The interval 1–21 (MGSTPTDLPGEDVADNRSGVG) is disordered. G2 is subject to N-acetylglycine. Y136 functions as the Proton donor in the catalytic mechanism. R189 contributes to the NADP(+) binding site. Residue K207 is the Proton acceptor of the active site. A divalent metal cation contacts are provided by E279, D280, and D303. NADP(+) contacts are provided by residues D303, 332–348 (LFLGAGEAGTGIAELIA), and N444.

It belongs to the malic enzymes family. In terms of assembly, homohexamers and homooctamers. Mg(2+) is required as a cofactor. Requires Mn(2+) as cofactor. Expressed in leaves, stems, flowers and roots. Particularly present in vasculatures, trichome basal cells and hydatodes.

It localises to the cytoplasm. The catalysed reaction is (S)-malate + NADP(+) = pyruvate + CO2 + NADPH. It carries out the reaction oxaloacetate + H(+) = pyruvate + CO2. With respect to regulation, activated by coenzyme A (CoA), aspartate, succinate and fumarate. Repressed by oxaloacetate, glucose and ATP. The protein is NADP-dependent malic enzyme 2 (NADP-ME2) of Arabidopsis thaliana (Mouse-ear cress).